The following is a 393-amino-acid chain: Elongation factor Tu (393 aa).

The tr-type G domain maps to lysine 10–valine 203. The interval glycine 19 to threonine 26 is G1. Glycine 19 to threonine 26 is a binding site for GTP. A Mg(2+)-binding site is contributed by threonine 26. The G2 stretch occupies residues glycine 60–serine 64. Residues aspartate 81 to glycine 84 form a G3 region. Residues aspartate 81–histidine 85 and asparagine 136–aspartate 139 each bind GTP. Residues asparagine 136–aspartate 139 are G4. Residues serine 173–leucine 175 form a G5 region.

This sequence belongs to the TRAFAC class translation factor GTPase superfamily. Classic translation factor GTPase family. EF-Tu/EF-1A subfamily. As to quaternary structure, monomer.

The protein localises to the cytoplasm. It carries out the reaction GTP + H2O = GDP + phosphate + H(+). GTP hydrolase that promotes the GTP-dependent binding of aminoacyl-tRNA to the A-site of ribosomes during protein biosynthesis. The sequence is that of Elongation factor Tu from Chlorobium chlorochromatii (strain CaD3).